The following is a 674-amino-acid chain: RNA polymerase sigma factor RpoD (674 aa).

A disordered region spans residues 214-252 (AEGAAPAARRPASDEPEYDADGNPISRIDEEEDDDDSSN). The segment at 440–510 (MVEANLRLVI…TRSIADQART (71 aa)) is sigma-70 factor domain-2. The short motif at 464 to 467 (DLIQ) is the Interaction with polymerase core subunit RpoC element. The sigma-70 factor domain-3 stretch occupies residues 519–595 (ETINKLVRTG…DKNAILPLDS (77 aa)). The sigma-70 factor domain-4 stretch occupies residues 608-661 (VLASLTPREERVLRMRFGIGMNTDHTLEEVGQQFSVTRERIRQIEAKALRKLKH). A DNA-binding region (H-T-H motif) is located at residues 634–653 (LEEVGQQFSVTRERIRQIEA).

The protein belongs to the sigma-70 factor family. RpoD/SigA subfamily. As to quaternary structure, interacts transiently with the RNA polymerase catalytic core.

Its subcellular location is the cytoplasm. Its function is as follows. Sigma factors are initiation factors that promote the attachment of RNA polymerase to specific initiation sites and are then released. This sigma factor is the primary sigma factor during exponential growth. This Rhodobacter capsulatus (strain ATCC BAA-309 / NBRC 16581 / SB1003) protein is RNA polymerase sigma factor RpoD.